The primary structure comprises 187 residues: Elongation factor P (187 aa).

It belongs to the elongation factor P family.

It is found in the cytoplasm. The protein operates within protein biosynthesis; polypeptide chain elongation. Functionally, involved in peptide bond synthesis. Stimulates efficient translation and peptide-bond synthesis on native or reconstituted 70S ribosomes in vitro. Probably functions indirectly by altering the affinity of the ribosome for aminoacyl-tRNA, thus increasing their reactivity as acceptors for peptidyl transferase. This is Elongation factor P from Tolumonas auensis (strain DSM 9187 / NBRC 110442 / TA 4).